The primary structure comprises 156 residues: DNA mismatch endonuclease Vsr (156 aa).

Mg(2+) contacts are provided by Asp-51 and Thr-63.

This sequence belongs to the Vsr family. Requires Mg(2+) as cofactor. Zn(2+) serves as cofactor.

In terms of biological role, deamination of 5-methylcytosine in DNA results in T/G mismatches. If unrepaired, these mismatches can lead to C-to-T transition mutations. The very short patch (VSP) repair process in E.coli counteracts the mutagenic process by repairing the mismatches in favor of the G-containing strand. This enzyme is an endonuclease that nicks double-stranded DNA within the sequence CT(AT)GN or NT(AT)GG next to the thymidine residue that is mismatched to 2'-deoxyguanosine. The incision is mismatch-dependent and strand-specific. The polypeptide is DNA mismatch endonuclease Vsr (Escherichia coli (strain K12)).